Reading from the N-terminus, the 479-residue chain is Aspartyl/glutamyl-tRNA(Asn/Gln) amidotransferase subunit B (479 aa).

This sequence belongs to the GatB/GatE family. GatB subfamily. As to quaternary structure, heterotrimer of A, B and C subunits.

It carries out the reaction L-glutamyl-tRNA(Gln) + L-glutamine + ATP + H2O = L-glutaminyl-tRNA(Gln) + L-glutamate + ADP + phosphate + H(+). It catalyses the reaction L-aspartyl-tRNA(Asn) + L-glutamine + ATP + H2O = L-asparaginyl-tRNA(Asn) + L-glutamate + ADP + phosphate + 2 H(+). Its function is as follows. Allows the formation of correctly charged Asn-tRNA(Asn) or Gln-tRNA(Gln) through the transamidation of misacylated Asp-tRNA(Asn) or Glu-tRNA(Gln) in organisms which lack either or both of asparaginyl-tRNA or glutaminyl-tRNA synthetases. The reaction takes place in the presence of glutamine and ATP through an activated phospho-Asp-tRNA(Asn) or phospho-Glu-tRNA(Gln). This is Aspartyl/glutamyl-tRNA(Asn/Gln) amidotransferase subunit B from Streptococcus uberis (strain ATCC BAA-854 / 0140J).